The primary structure comprises 353 residues: Probable arabinan endo-1,5-alpha-L-arabinosidase B (353 aa).

The first 16 residues, 1–16, serve as a signal peptide directing secretion; the sequence is MVLVATLFSLFTVSLC. Catalysis depends on aspartate 39, which acts as the Proton acceptor. Residue asparagine 194 is glycosylated (N-linked (GlcNAc...) asparagine). The disordered stretch occupies residues 202–227; sequence HLAKHPKTERVNSQDQNPDPLCRDSS. Glutamate 233 functions as the Proton donor in the catalytic mechanism.

The protein belongs to the glycosyl hydrolase 43 family.

It localises to the secreted. The enzyme catalyses Endohydrolysis of (1-&gt;5)-alpha-arabinofuranosidic linkages in (1-&gt;5)-arabinans.. It participates in glycan metabolism; L-arabinan degradation. Functionally, endo-1,5-alpha-L-arabinanase involved in degradation of pectin. Its preferred substrate is linear 1,5-alpha-L-arabinan. The polypeptide is Probable arabinan endo-1,5-alpha-L-arabinosidase B (abnB) (Aspergillus oryzae (strain ATCC 42149 / RIB 40) (Yellow koji mold)).